Here is a 322-residue protein sequence, read N- to C-terminus: 4-hydroxythreonine-4-phosphate dehydrogenase (322 aa).

2 residues coordinate substrate: H131 and T132. Residues H161, H206, and H259 each contribute to the a divalent metal cation site. Substrate is bound by residues K267, N276, and R285.

Belongs to the PdxA family. In terms of assembly, homodimer. A divalent metal cation is required as a cofactor.

It localises to the cytoplasm. The catalysed reaction is 4-(phosphooxy)-L-threonine + NAD(+) = 3-amino-2-oxopropyl phosphate + CO2 + NADH. It functions in the pathway cofactor biosynthesis; pyridoxine 5'-phosphate biosynthesis; pyridoxine 5'-phosphate from D-erythrose 4-phosphate: step 4/5. Functionally, catalyzes the NAD(P)-dependent oxidation of 4-(phosphooxy)-L-threonine (HTP) into 2-amino-3-oxo-4-(phosphooxy)butyric acid which spontaneously decarboxylates to form 3-amino-2-oxopropyl phosphate (AHAP). The sequence is that of 4-hydroxythreonine-4-phosphate dehydrogenase from Sulfurihydrogenibium sp. (strain YO3AOP1).